The chain runs to 627 residues: tRNA uridine 5-carboxymethylaminomethyl modification enzyme MnmG (627 aa).

Residues 16–21 (GAGHAG), valine 128, and serine 183 contribute to the FAD site. 277 to 291 (GPRYCPSIEDKIVRF) serves as a coordination point for NAD(+). Residue glutamine 374 participates in FAD binding.

This sequence belongs to the MnmG family. As to quaternary structure, homodimer. Heterotetramer of two MnmE and two MnmG subunits. Requires FAD as cofactor.

It is found in the cytoplasm. NAD-binding protein involved in the addition of a carboxymethylaminomethyl (cmnm) group at the wobble position (U34) of certain tRNAs, forming tRNA-cmnm(5)s(2)U34. This Finegoldia magna (strain ATCC 29328 / DSM 20472 / WAL 2508) (Peptostreptococcus magnus) protein is tRNA uridine 5-carboxymethylaminomethyl modification enzyme MnmG.